The primary structure comprises 281 residues: 4-deoxy-L-threo-5-hexosulose-uronate ketol-isomerase (281 aa).

Residues His-198, His-200, Glu-205, and His-248 each contribute to the Zn(2+) site.

The protein belongs to the KduI family. Zn(2+) is required as a cofactor.

The catalysed reaction is 5-dehydro-4-deoxy-D-glucuronate = 3-deoxy-D-glycero-2,5-hexodiulosonate. It participates in glycan metabolism; pectin degradation; 2-dehydro-3-deoxy-D-gluconate from pectin: step 4/5. Functionally, catalyzes the isomerization of 5-dehydro-4-deoxy-D-glucuronate to 3-deoxy-D-glycero-2,5-hexodiulosonate. This chain is 4-deoxy-L-threo-5-hexosulose-uronate ketol-isomerase, found in Lacticaseibacillus casei (strain BL23) (Lactobacillus casei).